A 228-amino-acid chain; its full sequence is Geranylgeranylglyceryl phosphate synthase (228 aa).

Lys13 is a binding site for sn-glycerol 1-phosphate. 2 residues coordinate Mg(2+): Asp15 and Thr41. Sn-glycerol 1-phosphate-binding positions include 159-164 (YVEYSG), Gly189, and 209-210 (GN).

Belongs to the GGGP/HepGP synthase family. Group I subfamily. The cofactor is Mg(2+).

It localises to the cytoplasm. It catalyses the reaction sn-glycerol 1-phosphate + (2E,6E,10E)-geranylgeranyl diphosphate = sn-3-O-(geranylgeranyl)glycerol 1-phosphate + diphosphate. Its pathway is membrane lipid metabolism; glycerophospholipid metabolism. Prenyltransferase that catalyzes the transfer of the geranylgeranyl moiety of geranylgeranyl diphosphate (GGPP) to the C3 hydroxyl of sn-glycerol-1-phosphate (G1P). This reaction is the first ether-bond-formation step in the biosynthesis of archaeal membrane lipids. The polypeptide is Geranylgeranylglyceryl phosphate synthase (Methanosphaerula palustris (strain ATCC BAA-1556 / DSM 19958 / E1-9c)).